Consider the following 127-residue polypeptide: Glycine cleavage system H protein (127 aa).

Positions 24 to 105 constitute a Lipoyl-binding domain; that stretch reads TALAGITDFA…YGEGWLVKIK (82 aa). K65 is subject to N6-lipoyllysine.

This sequence belongs to the GcvH family. As to quaternary structure, the glycine cleavage system is composed of four proteins: P, T, L and H. The cofactor is (R)-lipoate.

Its function is as follows. The glycine cleavage system catalyzes the degradation of glycine. The H protein shuttles the methylamine group of glycine from the P protein to the T protein. In Chlorobium phaeobacteroides (strain DSM 266 / SMG 266 / 2430), this protein is Glycine cleavage system H protein.